The following is a 948-amino-acid chain: Zinc finger CCCH domain-containing protein 18 (948 aa).

Met1 bears the N-acetylmethionine mark. The disordered stretch occupies residues 1–219; sequence MDVAESPELD…SDRKVRPRPT (219 aa). Phosphoserine is present on Ser6. Acidic residues predominate over residues 15-25; the sequence is EDEEQPALSDD. Ser33, Ser45, Ser58, Ser64, Ser71, Ser75, Ser80, and Ser92 each carry phosphoserine. The span at 70 to 86 shows a compositional bias: basic and acidic residues; that stretch reads ASEPKSQDQDSEAHELS. The span at 95–105 shows a compositional bias: acidic residues; that stretch reads EEGDDVEEDGT. Phosphothreonine is present on Thr105. 2 positions are modified to phosphoserine: Ser106 and Ser114. The segment covering 106–120 has biased composition (basic and acidic residues); it reads SDLRDEASSVTRELD. 2 stretches are compositionally biased toward acidic residues: residues 121–132 and 139–154; these read EHELDYDEEVPE and QEEE…EEEK. Ser169 bears the Phosphoserine mark. The segment covering 177–186 has biased composition (basic and acidic residues); that stretch reads EAAKEKKKED. Residues 187-203 show a composition bias toward acidic residues; sequence DDGEIDDGEIDDDDLEE. Residues 204–213 are compositionally biased toward basic and acidic residues; sequence GEVKDPSDRK. The C3H1-type zinc finger occupies 215–241; it reads RPRPTCRFFMKGNCTWGMSCRFIHPGV. Residue Gly245 is modified to Omega-N-methylarginine. Disordered regions lie at residues 272–296 and 388–922; these read ANPW…TESA and YTEA…TLSR. The span at 392-480 shows a compositional bias: basic and acidic residues; that stretch reads EPYHNYRERE…DREKDKEKPK (89 aa). Residues 395–460 are a coiled coil; the sequence is HNYRERERER…RERAKRDEKD (66 aa). Ser483 carries the post-translational modification Phosphoserine. Residue Lys506 forms a Glycyl lysine isopeptide (Lys-Gly) (interchain with G-Cter in SUMO2) linkage. The span at 506–516 shows a compositional bias: basic and acidic residues; the sequence is KRADEWKDPWR. Phosphoserine is present on residues Ser528, Ser530, and Ser532. Over residues 541 to 602 the composition is skewed to low complexity; the sequence is SASSASASNS…SRSRSFSSSP (62 aa). Residues 603–612 show a composition bias toward pro residues; it reads SPSPTPSPHR. Residues Lys618 and Lys657 each participate in a glycyl lysine isopeptide (Lys-Gly) (interchain with G-Cter in SUMO2) cross-link. Positions 657–666 are enriched in basic and acidic residues; it reads KPGDLREARR. 2 stretches are compositionally biased toward low complexity: residues 688–721 and 732–746; these read GSSY…SVHS and ASPV…PTPA. A compositionally biased stretch (basic and acidic residues) spans 756–770; that stretch reads KKEDGVREEKRRRDP. A compositionally biased stretch (low complexity) spans 774 to 804; the sequence is PPKSSKAPAGGKASQQAAAPQPAVPGQPQQG. Position 810 is an N6-acetyllysine (Lys810). Lys813 is covalently cross-linked (Glycyl lysine isopeptide (Lys-Gly) (interchain with G-Cter in SUMO2)). A compositionally biased stretch (basic and acidic residues) spans 820–837; it reads AADKGSRKRYEPSDKDRQ. Phosphoserine is present on residues Ser838, Ser847, Ser863, Ser888, and Ser891. A compositionally biased stretch (polar residues) spans 888–898; sequence SPQSKGSSKVT. The segment covering 902-919 has biased composition (low complexity); sequence GKATDTATAGTKSGKAST. A Glycyl lysine isopeptide (Lys-Gly) (interchain with G-Cter in SUMO2) cross-link involves residue Lys903. The stretch at 916-945 forms a coiled coil; the sequence is KASTLSRREELLKQLKAVEDAIARKRAKIP.

As to quaternary structure, interacts with ZFC3H1 in a RNase-insensitive manner.

It localises to the nucleus. The protein is Zinc finger CCCH domain-containing protein 18 (Zc3h18) of Mus musculus (Mouse).